The chain runs to 55 residues: Mitochondrial import receptor subunit TOM7 homolog (55 aa).

Residues 1-20 (MVKLSKEAKQRLQQLFKGGQ) lie on the Cytoplasmic side of the membrane. Residues 21-40 (FAIRWGFIPLVIYLGFTRGA) traverse the membrane as a helical segment. Over 41–55 (DPGMPEPSVLSLLWG) the chain is Mitochondrial intermembrane.

This sequence belongs to the Tom7 family. Forms part of the preprotein translocase complex of the outer mitochondrial membrane (TOM complex) which consists of at least 7 different proteins (TOMM5, TOMM6, TOMM7, TOMM20, TOMM22, TOMM40 and TOMM70).

Its subcellular location is the mitochondrion outer membrane. Required for assembly and stability of the TOM complex. Positive regulator of PRKN translocation to damaged mitochondria. Acts probably by stabilizing PINK1 on the outer membrane of depolarized mitochondria. This is Mitochondrial import receptor subunit TOM7 homolog (Tomm7) from Mus musculus (Mouse).